Here is a 430-residue protein sequence, read N- to C-terminus: Tol-Pal system protein TolB (430 aa).

A signal peptide spans Met-1–Ala-21.

Belongs to the TolB family. The Tol-Pal system is composed of five core proteins: the inner membrane proteins TolA, TolQ and TolR, the periplasmic protein TolB and the outer membrane protein Pal. They form a network linking the inner and outer membranes and the peptidoglycan layer.

The protein resides in the periplasm. In terms of biological role, part of the Tol-Pal system, which plays a role in outer membrane invagination during cell division and is important for maintaining outer membrane integrity. TolB occupies a key intermediary position in the Tol-Pal system because it communicates directly with both membrane-embedded components, Pal in the outer membrane and TolA in the inner membrane. The protein is Tol-Pal system protein TolB of Sodalis glossinidius (strain morsitans).